The chain runs to 106 residues: Small ribosomal subunit protein uS10 (106 aa).

It belongs to the universal ribosomal protein uS10 family. As to quaternary structure, part of the 30S ribosomal subunit.

Involved in the binding of tRNA to the ribosomes. The polypeptide is Small ribosomal subunit protein uS10 (Hyphomonas neptunium (strain ATCC 15444)).